Here is a 92-residue protein sequence, read N- to C-terminus: Small ribosomal subunit protein uS19 (92 aa).

This sequence belongs to the universal ribosomal protein uS19 family.

In terms of biological role, protein S19 forms a complex with S13 that binds strongly to the 16S ribosomal RNA. The protein is Small ribosomal subunit protein uS19 of Paramagnetospirillum magneticum (strain ATCC 700264 / AMB-1) (Magnetospirillum magneticum).